The primary structure comprises 422 residues: uncharacterized protein (422 aa).

It belongs to the asfivirus K421R family.

The protein resides in the virion. This is an uncharacterized protein from Ornithodoros (relapsing fever ticks).